Here is a 233-residue protein sequence, read N- to C-terminus: MEEYETDIKQILGTVDRQTVSAKQVRQLLEERRKVDLSAHKKDLNALILKCFDETAAPSEKESLEKQAPARKTKGKRATENGTEEGKKPAKRTRKRKEDGEEGGKRKRNQDPANNPLNKPMKLSPKLAEFLGLEQLSRPQTVKKLWEYIKAHDLQDPNDKRTILCDDKLKSVFEVDTLHMFTMNKYLTNLMTKIPDDQLPKPQPKNEEPAAPNDLPKQEEKELVEPPTAESTA.

Residues 1–53 enclose the DEK-C domain; it reads MEEYETDIKQILGTVDRQTVSAKQVRQLLEERRKVDLSAHKKDLNALILKCFD. Disordered stretches follow at residues 55–122 and 194–233; these read TAAP…KPMK and IPDD…ESTA. The SWIB/MDM2 domain occupies 116–193; the sequence is PLNKPMKLSP…NKYLTNLMTK (78 aa). Residues 194 to 208 show a composition bias toward basic and acidic residues; sequence IPDDQLPKPQPKNEE.

In terms of assembly, component of the UAF (upstream activation factor) complex which consists of spp27/uaf30, rrn5, rrn10, and histones H3 and H4. Interacts with rrn10.

It is found in the cytoplasm. Its subcellular location is the nucleus. Its function is as follows. Component of the UAF (upstream activation factor) complex which interacts with the upstream element of the RNA polymerase I promoter and forms a stable preinitiation complex. UAF seems to stimulate basal transcription to a fully activated level. The polypeptide is Upstream activation factor subunit spp27 (spp27) (Schizosaccharomyces pombe (strain 972 / ATCC 24843) (Fission yeast)).